The following is a 217-amino-acid chain: uncharacterized protein (217 aa).

Disordered regions lie at residues 1–85 (MGVK…RGNT) and 167–189 (KLRS…EPDE). The span at 38–48 (AKSDKDKRKGS) shows a compositional bias: basic and acidic residues. Low complexity predominate over residues 60 to 78 (NALPTKNLTTPPALNPLTT). The span at 172–189 (PHKDQHNSATNKDQEPDE) shows a compositional bias: basic and acidic residues.

This is an uncharacterized protein from Saccharomyces cerevisiae (strain ATCC 204508 / S288c) (Baker's yeast).